The following is a 566-amino-acid chain: Urease subunit alpha 2 (566 aa).

The Urease domain occupies 128–566; the sequence is GGVDTHIHFI…LPMAQRYFLF (439 aa). Positions 133, 135, and 216 each coordinate Ni(2+). N6-carboxylysine is present on lysine 216. Substrate is bound at residue histidine 218. Residues histidine 245 and histidine 271 each coordinate Ni(2+). Histidine 319 acts as the Proton donor in catalysis. Position 359 (aspartate 359) interacts with Ni(2+).

It belongs to the metallo-dependent hydrolases superfamily. Urease alpha subunit family. May form a heterohexamer of 3 UreC (alpha) and 3 UreAB (gamma/beta) subunits. May also form a heterotrimer of UreA (gamma), UreB (beta) and UreC (alpha) subunits. Three heterotrimers associate to form the active enzyme. The cofactor is Ni cation. Carboxylation allows a single lysine to coordinate two nickel ions.

The protein localises to the cytoplasm. The catalysed reaction is urea + 2 H2O + H(+) = hydrogencarbonate + 2 NH4(+). It participates in nitrogen metabolism; urea degradation; CO(2) and NH(3) from urea (urease route): step 1/1. In Pseudomonas syringae pv. syringae (strain B728a), this protein is Urease subunit alpha 2.